Reading from the N-terminus, the 304-residue chain is Mas-related G-protein coupled receptor member A1 (304 aa).

Residues 1-17 (MDNTIPGGINITILIPN) lie on the Extracellular side of the membrane. Asparagine 10 is a glycosylation site (N-linked (GlcNAc...) asparagine). Residues 18-38 (LMIIIFGLVGLTGNGIVFWLL) traverse the membrane as a helical segment. The Cytoplasmic segment spans residues 39–53 (GFCLHRNAFSVYILN). Residues 54-74 (LALADFFFLLGHIIDSILLLL) traverse the membrane as a helical segment. Residue asparagine 75 is a topological domain, extracellular. The helical transmembrane segment at 76–96 (VFYPITFLLCFYTIMMVLYIA) threads the bilayer. The Cytoplasmic segment spans residues 97–131 (GLSMLSAISTERCLSVLCPIWYHCHRPEHTSTVMC). Residues 132–152 (AVIWVLSLLICILNSYFCGFL) traverse the membrane as a helical segment. Residues 153–166 (NTQYKNENGCLALN) are Extracellular-facing. A helical membrane pass occupies residues 167–187 (FFTAAYLMFLFVVLCLSSLAL). The Cytoplasmic portion of the chain corresponds to 188 to 206 (VARLFCGTGQIKLTRLYVT). The chain crosses the membrane as a helical span at residues 207 to 227 (IILSILVFLLCGLPFGIHWFL). The Extracellular portion of the chain corresponds to 228-243 (LFKIKDDFHVFDLGFY). The chain crosses the membrane as a helical span at residues 244 to 264 (LASVVLTAINSCANPIIYFFV). Residues 265-304 (GSFRHRLKHQTLKMVLQNALQDTPETAKIMVEMSRSKSEP) are Cytoplasmic-facing.

The protein belongs to the G-protein coupled receptor 1 family. Mas subfamily. As to expression, expressed in a subset of sensory neurons that includes nociceptors. Expressed in the subclass of non-peptidergic sensory neurons that are IB4(+) and VR1(-).

The protein resides in the cell membrane. Functionally, orphan receptor activated by a subset of RFamide-family neuropeptides such as FLRF-amide and FMRF-amide. Mediates its action by association with G proteins that activate a phosphatidylinositol-calcium second messenger system. Its effect is mediated by G(q) and G(11) proteins. May regulate the function of nociceptive neurons by modulation of pain perception. The protein is Mas-related G-protein coupled receptor member A1 (Mrgpra1) of Mus musculus (Mouse).